We begin with the raw amino-acid sequence, 326 residues long: Thiazole synthase (326 aa).

Lysine 168 (schiff-base intermediate with DXP) is an active-site residue. Residues glycine 229, 255–256, and 277–278 contribute to the 1-deoxy-D-xylulose 5-phosphate site; these read AG and NT.

The protein belongs to the ThiG family. Homotetramer. Forms heterodimers with either ThiH or ThiS.

It is found in the cytoplasm. It carries out the reaction [ThiS sulfur-carrier protein]-C-terminal-Gly-aminoethanethioate + 2-iminoacetate + 1-deoxy-D-xylulose 5-phosphate = [ThiS sulfur-carrier protein]-C-terminal Gly-Gly + 2-[(2R,5Z)-2-carboxy-4-methylthiazol-5(2H)-ylidene]ethyl phosphate + 2 H2O + H(+). It participates in cofactor biosynthesis; thiamine diphosphate biosynthesis. Its function is as follows. Catalyzes the rearrangement of 1-deoxy-D-xylulose 5-phosphate (DXP) to produce the thiazole phosphate moiety of thiamine. Sulfur is provided by the thiocarboxylate moiety of the carrier protein ThiS. In vitro, sulfur can be provided by H(2)S. This Magnetococcus marinus (strain ATCC BAA-1437 / JCM 17883 / MC-1) protein is Thiazole synthase.